Consider the following 252-residue polypeptide: Segregation and condensation protein A (252 aa).

Residues 117-136 (EREEERQNAFTKPPSDLSEF) form a disordered region.

The protein belongs to the ScpA family. Component of a cohesin-like complex composed of ScpA, ScpB and the Smc homodimer, in which ScpA and ScpB bind to the head domain of Smc. The presence of the three proteins is required for the association of the complex with DNA.

It localises to the cytoplasm. In terms of biological role, participates in chromosomal partition during cell division. May act via the formation of a condensin-like complex containing Smc and ScpB that pull DNA away from mid-cell into both cell halves. This Bacillus pumilus (strain SAFR-032) protein is Segregation and condensation protein A.